Reading from the N-terminus, the 419-residue chain is Creatine kinase S-type, mitochondrial (419 aa).

A mitochondrion-targeting transit peptide spans 1-39; it reads MASTFSKLLTGRNASLLFATLGTSALTTGYLVNRQKVCA. A cardiolipin-binding region spans residues 40–64; sequence EARDQHKLFPPSADYPDLRKHNNCM. Residues 46–132 enclose the Phosphagen kinase N-terminal domain; that stretch reads KLFPPSADYP…FDPVIKLRHN (87 aa). In terms of domain architecture, Phosphagen kinase C-terminal spans 159-401; sequence YVLSSRVRTG…NYLVDCEKKL (243 aa). ATP-binding positions include 162-166 and His225; that span reads SSRVR. Residue Tyr255 is modified to Phosphotyrosine. Residues Arg270, Arg326, 354-359, and Asp369 each bind ATP; that span reads RGTGGV. Thr356 is subject to Phosphothreonine.

This sequence belongs to the ATP:guanido phosphotransferase family. As to quaternary structure, exists as an octamer composed of four CKMT2 homodimers.

The protein resides in the mitochondrion inner membrane. It catalyses the reaction creatine + ATP = N-phosphocreatine + ADP + H(+). In terms of biological role, reversibly catalyzes the transfer of phosphate between ATP and various phosphogens (e.g. creatine phosphate). Creatine kinase isoenzymes play a central role in energy transduction in tissues with large, fluctuating energy demands, such as skeletal muscle, heart, brain and spermatozoa. The sequence is that of Creatine kinase S-type, mitochondrial (CKMT2) from Oryctolagus cuniculus (Rabbit).